A 471-amino-acid polypeptide reads, in one-letter code: Chromosomal replication initiator protein DnaA (471 aa).

The interval 1–91 is domain I, interacts with DnaA modulators; that stretch reads MVDVSETTER…KYWQDESDAV (91 aa). The tract at residues 91-133 is domain II; the sequence is VYSVDICVSDGVGVQPQMAEHPDGAVDGPPVVMVGGTYDHLSS. The segment at 134–352 is domain III, AAA+ region; it reads PLDPRFTFDN…GALNKVVAHS (219 aa). Positions 180, 182, 183, and 184 each coordinate ATP. A domain IV, binds dsDNA region spans residues 353–471; that stretch reads SLVGRSVTIE…DINLLIRMLR (119 aa).

It belongs to the DnaA family. Oligomerizes as a right-handed, spiral filament on DNA at oriC.

It localises to the cytoplasm. Its function is as follows. Plays an essential role in the initiation and regulation of chromosomal replication. ATP-DnaA binds to the origin of replication (oriC) to initiate formation of the DNA replication initiation complex once per cell cycle. Binds the DnaA box (a 9 base pair repeat at the origin) and separates the double-stranded (ds)DNA. Forms a right-handed helical filament on oriC DNA; dsDNA binds to the exterior of the filament while single-stranded (ss)DNA is stabiized in the filament's interior. The ATP-DnaA-oriC complex binds and stabilizes one strand of the AT-rich DNA unwinding element (DUE), permitting loading of DNA polymerase. After initiation quickly degrades to an ADP-DnaA complex that is not apt for DNA replication. Binds acidic phospholipids. The polypeptide is Chromosomal replication initiator protein DnaA (Anaplasma marginale (strain St. Maries)).